Here is a 342-residue protein sequence, read N- to C-terminus: Succinylglutamate desuccinylase (342 aa).

Residues His64, Glu67, and His159 each contribute to the Zn(2+) site. Residue Glu222 is part of the active site.

This sequence belongs to the AspA/AstE family. Succinylglutamate desuccinylase subfamily. The cofactor is Zn(2+).

The catalysed reaction is N-succinyl-L-glutamate + H2O = L-glutamate + succinate. The protein operates within amino-acid degradation; L-arginine degradation via AST pathway; L-glutamate and succinate from L-arginine: step 5/5. Functionally, transforms N(2)-succinylglutamate into succinate and glutamate. This chain is Succinylglutamate desuccinylase, found in Burkholderia orbicola (strain MC0-3).